A 1131-amino-acid chain; its full sequence is Homeobox-DDT domain protein RLT3 (1131 aa).

The homeobox; TALE-type DNA-binding region spans 2 to 56; it reads KRKSPLQVQALEGFYLEQMYPTPKEMEDLGKSLGLTLKEVRGWFKRRRSRGKGVK. The segment covering 239-251 has biased composition (basic residues); that stretch reads LQKRSTEKKRRSI. A disordered region spans residues 239-264; the sequence is LQKRSTEKKRRSIHREAELNKDETQR. A compositionally biased stretch (basic and acidic residues) spans 252 to 264; that stretch reads HREAELNKDETQR. The region spanning 365-424 is the DDT domain; the sequence is PESVKKLFKVVHFLYTYSVTLDIGPFTLDEFTRAFHDKDSLLLGKIHLSLLKLLLLDVET. The disordered stretch occupies residues 579-609; that stretch reads EDPDKSQSDSDDSGSVDDESDDCSISSGDEI. The segment covering 587 to 600 has biased composition (acidic residues); that stretch reads DSDDSGSVDDESDD.

The protein resides in the nucleus. Functionally, transcriptional regulator required for the maintenance of the plant vegetative phase. May prevent the early activation of the vegetative-to-reproductive transition by regulating key genes that contribute to flower timing. The protein is Homeobox-DDT domain protein RLT3 of Arabidopsis thaliana (Mouse-ear cress).